The following is a 184-amino-acid chain: Deoxyuridine 5'-triphosphate nucleotidohydrolase (184 aa).

Polar residues predominate over residues 1 to 16; that stretch reads MPHTQTDAHQNNQENF. A disordered region spans residues 1–25; it reads MPHTQTDAHQNNQENFSSSLISSRP. Substrate-binding positions include 96-98, N109, 113-115, and K123; these read RSG and TID. A disordered region spans residues 165 to 184; the sequence is STKNTVGNRGAGGFGSTGHD. The segment covering 173–184 has biased composition (gly residues); that stretch reads RGAGGFGSTGHD.

Belongs to the dUTPase family. Mg(2+) is required as a cofactor.

The catalysed reaction is dUTP + H2O = dUMP + diphosphate + H(+). Its pathway is pyrimidine metabolism; dUMP biosynthesis; dUMP from dCTP (dUTP route): step 2/2. In terms of biological role, this enzyme is involved in nucleotide metabolism: it produces dUMP, the immediate precursor of thymidine nucleotides and it decreases the intracellular concentration of dUTP so that uracil cannot be incorporated into DNA. In Bartonella henselae (strain ATCC 49882 / DSM 28221 / CCUG 30454 / Houston 1) (Rochalimaea henselae), this protein is Deoxyuridine 5'-triphosphate nucleotidohydrolase.